A 150-amino-acid chain; its full sequence is SsrA-binding protein (150 aa).

It belongs to the SmpB family.

Its subcellular location is the cytoplasm. In terms of biological role, required for rescue of stalled ribosomes mediated by trans-translation. Binds to transfer-messenger RNA (tmRNA), required for stable association of tmRNA with ribosomes. tmRNA and SmpB together mimic tRNA shape, replacing the anticodon stem-loop with SmpB. tmRNA is encoded by the ssrA gene; the 2 termini fold to resemble tRNA(Ala) and it encodes a 'tag peptide', a short internal open reading frame. During trans-translation Ala-aminoacylated tmRNA acts like a tRNA, entering the A-site of stalled ribosomes, displacing the stalled mRNA. The ribosome then switches to translate the ORF on the tmRNA; the nascent peptide is terminated with the 'tag peptide' encoded by the tmRNA and targeted for degradation. The ribosome is freed to recommence translation, which seems to be the essential function of trans-translation. The polypeptide is SsrA-binding protein (Campylobacter jejuni subsp. jejuni serotype O:6 (strain 81116 / NCTC 11828)).